A 300-amino-acid polypeptide reads, in one-letter code: GTP cyclohydrolase FolE2 (300 aa).

It belongs to the GTP cyclohydrolase IV family.

The enzyme catalyses GTP + H2O = 7,8-dihydroneopterin 3'-triphosphate + formate + H(+). It participates in cofactor biosynthesis; 7,8-dihydroneopterin triphosphate biosynthesis; 7,8-dihydroneopterin triphosphate from GTP: step 1/1. Its function is as follows. Converts GTP to 7,8-dihydroneopterin triphosphate. In Bacillus licheniformis (strain ATCC 14580 / DSM 13 / JCM 2505 / CCUG 7422 / NBRC 12200 / NCIMB 9375 / NCTC 10341 / NRRL NRS-1264 / Gibson 46), this protein is GTP cyclohydrolase FolE2.